Here is a 747-residue protein sequence, read N- to C-terminus: Putative ankyrin repeat protein FPV222 (747 aa).

ANK repeat units follow at residues 38-67, 103-132, 136-165, 169-198, 202-231, 234-263, 294-323, 328-357, 361-393, 397-426, 430-460, 464-493, 495-524, and 529-559; these read DNCTMLYTAVEHRYIDIIKLLLDHGADPNI, NYRNTFFVYNENRNLEIAKMLIQNGALVNM, KNITPLHIASSSGSYKMVELLLLHGANTNA, YGETSLHYSVSSNDLNISELLIENGTNVNV, DSITALIIAVEIMSIDLVRLLLDKGADTNA, LERFKLYVTETKQNNNILKYLNTNNVNTNV, PCTVPVTLATRKGSKELLEILLEYGCNPDI, TSTYAMHYAVIRKHYEMLNILIRYDAYTDV, QQNTPAHYAVKLPISESCKYLKLLKLAGASFNL, KGRTPLHTACKYNNTEAVKYLIESGCDTNI, MSFTPLNYAVYYEREDTVKILLESGCVDPNL, KEVSPIIQAIKRNNKNIIKMLLNAGIDIKP, NECYGLHMLAALHNKDLLKWLLCTISELEV, and DHYVPLASYVAELSDIRIMEILIEKGLDLNK.

This Vertebrata (FPV) protein is Putative ankyrin repeat protein FPV222.